Reading from the N-terminus, the 178-residue chain is Small ribosomal subunit protein uS7c (178 aa).

The span at 137-146 (QKKEEIEKSK) shows a compositional bias: basic and acidic residues. The tract at residues 137 to 178 (QKKEEIEKSKSPVNNNKKFISKNKKSKNKKQKKRLKRKKNIY) is disordered. The span at 155–178 (FISKNKKSKNKKQKKRLKRKKNIY) shows a compositional bias: basic residues.

Belongs to the universal ribosomal protein uS7 family. Part of the 30S ribosomal subunit.

It localises to the plastid. In terms of biological role, one of the primary rRNA binding proteins, it binds directly to 16S rRNA where it nucleates assembly of the head domain of the 30S subunit. The sequence is that of Small ribosomal subunit protein uS7c (rps7) from Euglena longa (Euglenophycean alga).